The following is a 210-amino-acid chain: MQNKIQGVYLVTDRPLCLHHKLEEVVQMAASGGVSLVQLREKDSTSREFLELAIHLKFILSPFQVPLLINDRVDLCLASGADGVHLGQTDLPWLEARRILGKDAIIGLSIETKEDFATLTKEDPNPQLEYLAVSPVFDTPTKTNTKEALGLAGVRWLKEKTDIPVVAIGGINISNAKDVIGAGADMIAVVSAICSAKNPKEATVALRNQF.

4-amino-2-methyl-5-(diphosphooxymethyl)pyrimidine is bound by residues 38-42 (QLREK) and N70. Mg(2+) contacts are provided by D71 and D90. Residue S109 coordinates 4-amino-2-methyl-5-(diphosphooxymethyl)pyrimidine. 139–141 (TPT) lines the 2-[(2R,5Z)-2-carboxy-4-methylthiazol-5(2H)-ylidene]ethyl phosphate pocket. K142 is a binding site for 4-amino-2-methyl-5-(diphosphooxymethyl)pyrimidine. 2-[(2R,5Z)-2-carboxy-4-methylthiazol-5(2H)-ylidene]ethyl phosphate is bound by residues G170 and 190–191 (VS).

It belongs to the thiamine-phosphate synthase family. Mg(2+) serves as cofactor.

It carries out the reaction 2-[(2R,5Z)-2-carboxy-4-methylthiazol-5(2H)-ylidene]ethyl phosphate + 4-amino-2-methyl-5-(diphosphooxymethyl)pyrimidine + 2 H(+) = thiamine phosphate + CO2 + diphosphate. The enzyme catalyses 2-(2-carboxy-4-methylthiazol-5-yl)ethyl phosphate + 4-amino-2-methyl-5-(diphosphooxymethyl)pyrimidine + 2 H(+) = thiamine phosphate + CO2 + diphosphate. It catalyses the reaction 4-methyl-5-(2-phosphooxyethyl)-thiazole + 4-amino-2-methyl-5-(diphosphooxymethyl)pyrimidine + H(+) = thiamine phosphate + diphosphate. It participates in cofactor biosynthesis; thiamine diphosphate biosynthesis; thiamine phosphate from 4-amino-2-methyl-5-diphosphomethylpyrimidine and 4-methyl-5-(2-phosphoethyl)-thiazole: step 1/1. In terms of biological role, condenses 4-methyl-5-(beta-hydroxyethyl)thiazole monophosphate (THZ-P) and 2-methyl-4-amino-5-hydroxymethyl pyrimidine pyrophosphate (HMP-PP) to form thiamine monophosphate (TMP). The chain is Thiamine-phosphate synthase from Leptospira biflexa serovar Patoc (strain Patoc 1 / Ames).